We begin with the raw amino-acid sequence, 890 residues long: Protein translocase subunit SecA (890 aa).

ATP-binding positions include Q86, 104 to 108 (GEGKT), and D493. The span at 851–872 (EASHGDGDAKKAPVVKKEESGR) shows a compositional bias: basic and acidic residues. Residues 851 to 873 (EASHGDGDAKKAPVVKKEESGRN) are disordered. Residues C876, C878, C887, and C888 each coordinate Zn(2+).

This sequence belongs to the SecA family. In terms of assembly, monomer and homodimer. Part of the essential Sec protein translocation apparatus which comprises SecA, SecYEG and auxiliary proteins SecDF. Other proteins may also be involved. Requires Zn(2+) as cofactor.

It is found in the cell membrane. The protein resides in the cytoplasm. The catalysed reaction is ATP + H2O + cellular proteinSide 1 = ADP + phosphate + cellular proteinSide 2.. Part of the Sec protein translocase complex. Interacts with the SecYEG preprotein conducting channel. Has a central role in coupling the hydrolysis of ATP to the transfer of proteins into and across the cell membrane, serving as an ATP-driven molecular motor driving the stepwise translocation of polypeptide chains across the membrane. The chain is Protein translocase subunit SecA from Alkaliphilus oremlandii (strain OhILAs) (Clostridium oremlandii (strain OhILAs)).